A 317-amino-acid polypeptide reads, in one-letter code: MIVVTGAAGFIGSNLVKALNDMGRNDIIAVDDLTDGTKMFNLADCEIADYLDKDQFLEQIIAGEFDGKIEVIFHQGACSSTTEWDGKFMMSNNYEYSKTLLQFCDRTKCQYIYASSASVYGGSEKFIEQRDLEKPLNVYAYSKFLFDQYVRQQKPNCQVAGLRYFNVYGPREQHKGGMASVAFHFNNQLNANGICRLFEGVDGYENGQQLRDFVYVEDVVKVNLWLWQNSEVSGIFNCGTGQAQSFNDVANAVIAHHGKGAVEYIPFPDKLKGAYQSYTQADLTKLRAAGYTAEFKTVEQAVPEYLSWLATQHFIGE.

Residues 10 to 11, 31 to 32, lysine 38, lysine 53, 75 to 79, and asparagine 92 contribute to the NADP(+) site; these read FI, DD, and QGACS. Tyrosine 139 (proton acceptor) is an active-site residue. Lysine 143 contacts NADP(+). A substrate-binding site is contributed by asparagine 166. Residues valine 167 and lysine 175 each coordinate NADP(+). Lysine 175 serves as the catalytic Proton acceptor. Substrate-binding positions include glycine 177, histidine 184, 198–201, arginine 211, and tyrosine 275; that span reads FEGV.

Belongs to the NAD(P)-dependent epimerase/dehydratase family. HldD subfamily. In terms of assembly, homopentamer. NADP(+) serves as cofactor.

It catalyses the reaction ADP-D-glycero-beta-D-manno-heptose = ADP-L-glycero-beta-D-manno-heptose. Its pathway is nucleotide-sugar biosynthesis; ADP-L-glycero-beta-D-manno-heptose biosynthesis; ADP-L-glycero-beta-D-manno-heptose from D-glycero-beta-D-manno-heptose 7-phosphate: step 4/4. Its function is as follows. Catalyzes the interconversion between ADP-D-glycero-beta-D-manno-heptose and ADP-L-glycero-beta-D-manno-heptose via an epimerization at carbon 6 of the heptose. In Shewanella piezotolerans (strain WP3 / JCM 13877), this protein is ADP-L-glycero-D-manno-heptose-6-epimerase.